We begin with the raw amino-acid sequence, 83 residues long: ATP synthase subunit c, chloroplastic (83 aa).

2 helical membrane-spanning segments follow: residues 4-24 and 57-77; these read IISA…AIGP and LAFM…LLFA.

Belongs to the ATPase C chain family. In terms of assembly, F-type ATPases have 2 components, F(1) - the catalytic core - and F(0) - the membrane proton channel. F(1) has five subunits: alpha(3), beta(3), gamma(1), delta(1), epsilon(1). F(0) has four main subunits: a(1), b(1), b'(1) and c(10-14). The alpha and beta chains form an alternating ring which encloses part of the gamma chain. F(1) is attached to F(0) by a central stalk formed by the gamma and epsilon chains, while a peripheral stalk is formed by the delta, b and b' chains.

The protein resides in the plastid. It is found in the chloroplast thylakoid membrane. Its function is as follows. F(1)F(0) ATP synthase produces ATP from ADP in the presence of a proton or sodium gradient. F-type ATPases consist of two structural domains, F(1) containing the extramembraneous catalytic core and F(0) containing the membrane proton channel, linked together by a central stalk and a peripheral stalk. During catalysis, ATP synthesis in the catalytic domain of F(1) is coupled via a rotary mechanism of the central stalk subunits to proton translocation. Key component of the F(0) channel; it plays a direct role in translocation across the membrane. A homomeric c-ring of between 10-14 subunits forms the central stalk rotor element with the F(1) delta and epsilon subunits. This chain is ATP synthase subunit c, chloroplastic, found in Galdieria sulphuraria (Red alga).